The primary structure comprises 477 residues: Alanine--glyoxylate aminotransferase 2 homolog 2, mitochondrial (477 aa).

The transit peptide at methionine 1–isoleucine 22 directs the protein to the mitochondrion. Pyridoxal 5'-phosphate is bound by residues glycine 165 to threonine 166, tyrosine 192, and aspartate 292 to glutamine 295. At lysine 321 the chain carries N6-(pyridoxal phosphate)lysine. Residue threonine 350 participates in pyridoxal 5'-phosphate binding.

This sequence belongs to the class-III pyridoxal-phosphate-dependent aminotransferase family. In terms of assembly, homotetramer. Interacts with GRF3. The cofactor is pyridoxal 5'-phosphate.

Its subcellular location is the mitochondrion. The enzyme catalyses glyoxylate + L-alanine = glycine + pyruvate. In Arabidopsis thaliana (Mouse-ear cress), this protein is Alanine--glyoxylate aminotransferase 2 homolog 2, mitochondrial (AGT3).